Consider the following 80-residue polypeptide: U19-lycotoxin-Ls1a (80 aa).

The signal sequence occupies residues 1-22 (MSPKVQALIFIVGLITLLAAHA). Residues 23–34 (QEELSDNTESER) constitute a propeptide that is removed on maturation. Intrachain disulfides connect cysteine 36-cysteine 50, cysteine 43-cysteine 55, cysteine 49-cysteine 66, and cysteine 57-cysteine 64.

It belongs to the neurotoxin 02 (plectoxin) family. 05 (U19-lycotoxin) subfamily. In terms of tissue distribution, expressed by the venom gland.

Its subcellular location is the secreted. The chain is U19-lycotoxin-Ls1a from Lycosa singoriensis (Wolf spider).